The primary structure comprises 290 residues: Protein MGF 110-9L (290 aa).

A signal peptide spans 1 to 19; the sequence is MKVIVLLLVLAVMQPVIQS. One copy of the A repeat lies at 1 to 160; that stretch reads MKVIVLLLVL…QYSRMRMQAA (160 aa). The next 2 helical transmembrane spans lie at 128-148 and 163-183; these read VENI…IGYV and LLIF…IIMN. Residues 161-290 form a B repeat; that stretch reads TRLLIFLGLY…KRHVINQDDL (130 aa).

The protein belongs to the asfivirus MGF 110 family.

Its subcellular location is the membrane. This is Protein MGF 110-9L from Ornithodoros (relapsing fever ticks).